The primary structure comprises 211 residues: Large ribosomal subunit protein uL3 (211 aa).

An N5-methylglutamine modification is found at Gln150.

It belongs to the universal ribosomal protein uL3 family. In terms of assembly, part of the 50S ribosomal subunit. Forms a cluster with proteins L14 and L19. Methylated by PrmB.

In terms of biological role, one of the primary rRNA binding proteins, it binds directly near the 3'-end of the 23S rRNA, where it nucleates assembly of the 50S subunit. This chain is Large ribosomal subunit protein uL3, found in Pseudomonas savastanoi pv. phaseolicola (strain 1448A / Race 6) (Pseudomonas syringae pv. phaseolicola (strain 1448A / Race 6)).